Here is a 297-residue protein sequence, read N- to C-terminus: Farnesyl diphosphate synthase (297 aa).

Residues lysine 47, arginine 50, and histidine 79 each contribute to the isopentenyl diphosphate site. The Mg(2+) site is built by aspartate 86 and aspartate 92. Arginine 97 provides a ligand contact to (2E)-geranyl diphosphate. Arginine 98 is an isopentenyl diphosphate binding site. Positions 183, 184, 221, and 238 each coordinate (2E)-geranyl diphosphate.

This sequence belongs to the FPP/GGPP synthase family. Mg(2+) is required as a cofactor.

The protein localises to the cytoplasm. The catalysed reaction is isopentenyl diphosphate + (2E)-geranyl diphosphate = (2E,6E)-farnesyl diphosphate + diphosphate. This chain is Farnesyl diphosphate synthase, found in Geobacillus stearothermophilus (Bacillus stearothermophilus).